A 355-amino-acid polypeptide reads, in one-letter code: UDP-N-acetylglucosamine--N-acetylmuramyl-(pentapeptide) pyrophosphoryl-undecaprenol N-acetylglucosamine transferase (355 aa).

Residues 15-17 (TGG), asparagine 127, arginine 163, serine 191, isoleucine 244, 263-268 (ALTVSE), and glutamine 288 each bind UDP-N-acetyl-alpha-D-glucosamine.

It belongs to the glycosyltransferase 28 family. MurG subfamily.

Its subcellular location is the cell inner membrane. The enzyme catalyses di-trans,octa-cis-undecaprenyl diphospho-N-acetyl-alpha-D-muramoyl-L-alanyl-D-glutamyl-meso-2,6-diaminopimeloyl-D-alanyl-D-alanine + UDP-N-acetyl-alpha-D-glucosamine = di-trans,octa-cis-undecaprenyl diphospho-[N-acetyl-alpha-D-glucosaminyl-(1-&gt;4)]-N-acetyl-alpha-D-muramoyl-L-alanyl-D-glutamyl-meso-2,6-diaminopimeloyl-D-alanyl-D-alanine + UDP + H(+). It functions in the pathway cell wall biogenesis; peptidoglycan biosynthesis. Functionally, cell wall formation. Catalyzes the transfer of a GlcNAc subunit on undecaprenyl-pyrophosphoryl-MurNAc-pentapeptide (lipid intermediate I) to form undecaprenyl-pyrophosphoryl-MurNAc-(pentapeptide)GlcNAc (lipid intermediate II). This chain is UDP-N-acetylglucosamine--N-acetylmuramyl-(pentapeptide) pyrophosphoryl-undecaprenol N-acetylglucosamine transferase, found in Salmonella paratyphi A (strain ATCC 9150 / SARB42).